We begin with the raw amino-acid sequence, 33 residues long: Putative tumor antigen NA88-A (33 aa).

Expressed in testis and melanoma cell lines.

The sequence is that of Putative tumor antigen NA88-A (VENTXP1) from Homo sapiens (Human).